The sequence spans 350 residues: Protein XRP2 (350 aa).

Residues 1-10 are compositionally biased toward basic residues; sequence MGCFFSKRRK. The disordered stretch occupies residues 1–31; it reads MGCFFSKRRKADKESRPENEEERPKQYSWDQ. A lipid anchor (N-myristoyl glycine) is attached at glycine 2. Cysteine 3 carries the S-palmitoyl cysteine lipid modification. Basic and acidic residues predominate over residues 11–31; that stretch reads ADKESRPENEEERPKQYSWDQ. Positions 24 to 179 constitute a C-CAP/cofactor C-like domain; that stretch reads PKQYSWDQRE…TWSNIHDFTP (156 aa). Residues 98–99 and 115–118 contribute to the GTP site; these read GS and QQFR.

The protein belongs to the TBCC family. As to quaternary structure, found in a complex with ARL3, RP2 and UNC119 (or UNC119B); RP2 induces hydrolysis of GTP ARL3 in the complex, leading to the release of UNC119 (or UNC119B). Interacts with ARL3; interaction is direct and stimulated with the activated GTP-bound form of ARL3. Post-translationally, myristoylated on Gly-2; which may be required for membrane targeting. Palmitoylated on Cys-3; which may be required for plasma membrane targeting. Mutation of Cys-3 targets the protein to internal membranes. Ubiquitous. Expressed in the rod and cone photoreceptors, extending from the tips of the outer segment (OS) through the inner segment (IS) and outer nuclear layer (ONL) and into the synaptic terminals of the outer plexiform layer (ONL). Also detected in the bipolar, horizontal and amacrine cells in the inner nuclear layer (INL), extending to the inner plexiform layer (IPL) and though the ganglion cell layer (GCL) and into the nerve fiber layer (NFL) (at protein level).

It localises to the cell membrane. The protein localises to the cell projection. Its subcellular location is the cilium. Its function is as follows. Acts as a GTPase-activating protein (GAP) involved in trafficking between the Golgi and the ciliary membrane. Involved in localization of proteins, such as NPHP3, to the cilium membrane by inducing hydrolysis of GTP ARL3, leading to the release of UNC119 (or UNC119B). Acts as a GTPase-activating protein (GAP) for tubulin in concert with tubulin-specific chaperone C, but does not enhance tubulin heterodimerization. Acts as a guanine nucleotide dissociation inhibitor towards ADP-ribosylation factor-like proteins. In Homo sapiens (Human), this protein is Protein XRP2 (RP2).